The primary structure comprises 359 residues: Fructose-bisphosphate aldolase, cytoplasmic isozyme (359 aa).

Residues arginine 52 and lysine 142 each contribute to the substrate site. Glutamate 184 (proton acceptor) is an active-site residue. The Schiff-base intermediate with dihydroxyacetone-P role is filled by lysine 226.

This sequence belongs to the class I fructose-bisphosphate aldolase family.

It is found in the cytoplasm. The catalysed reaction is beta-D-fructose 1,6-bisphosphate = D-glyceraldehyde 3-phosphate + dihydroxyacetone phosphate. It participates in carbohydrate degradation; glycolysis; D-glyceraldehyde 3-phosphate and glycerone phosphate from D-glucose: step 4/4. The polypeptide is Fructose-bisphosphate aldolase, cytoplasmic isozyme (ALDC) (Cicer arietinum (Chickpea)).